A 349-amino-acid polypeptide reads, in one-letter code: Protein-glutamate methylesterase/protein-glutamine glutaminase (349 aa).

A Response regulatory domain is found at 5 to 122 (RVLSVDDSAL…REGMLAYNEM (118 aa)). 4-aspartylphosphate is present on aspartate 56. Positions 152-344 (LLSSEKLIAI…QQMLAKISAG (193 aa)) constitute a CheB-type methylesterase domain. Residues serine 164, histidine 190, and aspartate 286 contribute to the active site.

It belongs to the CheB family. Interacts with CheA. Binds to a C-terminal pentapeptide sequence carried by certain receptors. Phosphorylated by CheA. Phosphorylation of the N-terminal regulatory domain activates the methylesterase activity.

The protein localises to the cytoplasm. It catalyses the reaction [protein]-L-glutamate 5-O-methyl ester + H2O = L-glutamyl-[protein] + methanol + H(+). The enzyme catalyses L-glutaminyl-[protein] + H2O = L-glutamyl-[protein] + NH4(+). Its activity is regulated as follows. Methylesterase activity is activated via phosphorylation in response to negative chemotactic stimuli and is inhibited in the presence of attractants. Activation requires both CheA and CheW. Functionally, involved in chemotaxis. Part of a chemotaxis signal transduction system that modulates chemotaxis in response to various stimuli. Catalyzes the demethylation of specific methylglutamate residues introduced into the chemoreceptors (methyl-accepting chemotaxis proteins or MCP) by CheR. Also mediates the irreversible deamidation of specific glutamine residues to glutamic acid. Catalyzes its own deactivation by removing the activating phosphoryl group. This chain is Protein-glutamate methylesterase/protein-glutamine glutaminase, found in Escherichia coli (strain K12).